The following is a 418-amino-acid chain: AP-1 complex subunit mu (418 aa).

In terms of domain architecture, MHD spans 176–417 (NNEAYFDVTE…VTKAGKFQVR (242 aa)).

The protein belongs to the adaptor complexes medium subunit family. As to quaternary structure, adaptor protein complex 1 (AP-1) is a heterotetramer composed of two large adaptins (gamma- and beta'-type subunits), a medium adaptin (mu-type subunit AP47) and a small adaptin (sigma-type subunit AP19). Regulated by phosphorylation.

It localises to the golgi apparatus. Its subcellular location is the cytoplasmic vesicle. The protein resides in the clathrin-coated vesicle membrane. In terms of biological role, component of the adapter complexes which link clathrin to receptors in coated vesicles. Clathrin-associated protein complexes are believed to interact with the cytoplasmic tails of membrane proteins, leading to their selection and concentration. AP47 is a subunit of the plasma membrane adapter. The sequence is that of AP-1 complex subunit mu from Diplobatis ommata (Ocellated electric ray).